Here is a 261-residue protein sequence, read N- to C-terminus: Cytochrome c oxidase subunit 3 (261 aa).

The Mitochondrial matrix portion of the chain corresponds to 1 to 15 (MTHQTHAYHTVNPSP). Residues 16-34 (WPLTGALSALLMTSGLIMW) form a helical membrane-spanning segment. Over 35–40 (FHFNSP) the chain is Mitochondrial intermembrane. Residues 41–66 (LLLVLGLTTNFLTMYQWWRDIIREST) traverse the membrane as a helical segment. Topologically, residues 67 to 72 (FQGHHT) are mitochondrial matrix. Residues 73-105 (TIVQKGLRYGMILFIVSEVFFFAGFFWAFYHSS) form a helical membrane-spanning segment. Residues 106–128 (LAPTPELGGCWPPTGINPLNPLE) are Mitochondrial intermembrane-facing. A helical transmembrane segment spans residues 129–152 (VPLLNTSVLLASGVSITWAHHSLM). At 153–155 (EGH) the chain is on the mitochondrial matrix side. Residues 156 to 183 (RKHMLQALFITIALGVYFTLLQASEYYE) traverse the membrane as a helical segment. The Mitochondrial intermembrane segment spans residues 184–190 (APFTISD). A helical transmembrane segment spans residues 191 to 223 (GIYGSTFFVATGFHGLHVIIGSSFLIVCFMRQL). The Mitochondrial matrix segment spans residues 224-232 (KFHFTSSHH). A helical transmembrane segment spans residues 233–256 (FGFEAAAWYWHFVDVVWLFLYVSI). Over 257-261 (YWWGS) the chain is Mitochondrial intermembrane.

Belongs to the cytochrome c oxidase subunit 3 family. As to quaternary structure, component of the cytochrome c oxidase (complex IV, CIV), a multisubunit enzyme composed of 14 subunits. The complex is composed of a catalytic core of 3 subunits MT-CO1, MT-CO2 and MT-CO3, encoded in the mitochondrial DNA, and 11 supernumerary subunits COX4I, COX5A, COX5B, COX6A, COX6B, COX6C, COX7A, COX7B, COX7C, COX8 and NDUFA4, which are encoded in the nuclear genome. The complex exists as a monomer or a dimer and forms supercomplexes (SCs) in the inner mitochondrial membrane with NADH-ubiquinone oxidoreductase (complex I, CI) and ubiquinol-cytochrome c oxidoreductase (cytochrome b-c1 complex, complex III, CIII), resulting in different assemblies (supercomplex SCI(1)III(2)IV(1) and megacomplex MCI(2)III(2)IV(2)).

The protein resides in the mitochondrion inner membrane. The enzyme catalyses 4 Fe(II)-[cytochrome c] + O2 + 8 H(+)(in) = 4 Fe(III)-[cytochrome c] + 2 H2O + 4 H(+)(out). Functionally, component of the cytochrome c oxidase, the last enzyme in the mitochondrial electron transport chain which drives oxidative phosphorylation. The respiratory chain contains 3 multisubunit complexes succinate dehydrogenase (complex II, CII), ubiquinol-cytochrome c oxidoreductase (cytochrome b-c1 complex, complex III, CIII) and cytochrome c oxidase (complex IV, CIV), that cooperate to transfer electrons derived from NADH and succinate to molecular oxygen, creating an electrochemical gradient over the inner membrane that drives transmembrane transport and the ATP synthase. Cytochrome c oxidase is the component of the respiratory chain that catalyzes the reduction of oxygen to water. Electrons originating from reduced cytochrome c in the intermembrane space (IMS) are transferred via the dinuclear copper A center (CU(A)) of subunit 2 and heme A of subunit 1 to the active site in subunit 1, a binuclear center (BNC) formed by heme A3 and copper B (CU(B)). The BNC reduces molecular oxygen to 2 water molecules using 4 electrons from cytochrome c in the IMS and 4 protons from the mitochondrial matrix. This is Cytochrome c oxidase subunit 3 (MT-CO3) from Dasypus novemcinctus (Nine-banded armadillo).